The sequence spans 214 residues: Holliday junction branch migration complex subunit RuvA (214 aa).

The domain I stretch occupies residues 1–64 (MITRIRGEML…EDAMTLYGFT (64 aa)). Residues 65 to 143 (SGEQLAVFEL…DITSKDAYQD (79 aa)) are domain II. The flexible linker stretch occupies residues 144–160 (ISASEKLDNTGEKLGIS). Residues 161–214 (TRHKHLDELKAALSSLGYTNREIEKTVDAIQGQITEGQDMEELLRLALQKLNTK) form a domain III region.

This sequence belongs to the RuvA family. As to quaternary structure, homotetramer. Forms an RuvA(8)-RuvB(12)-Holliday junction (HJ) complex. HJ DNA is sandwiched between 2 RuvA tetramers; dsDNA enters through RuvA and exits via RuvB. An RuvB hexamer assembles on each DNA strand where it exits the tetramer. Each RuvB hexamer is contacted by two RuvA subunits (via domain III) on 2 adjacent RuvB subunits; this complex drives branch migration. In the full resolvosome a probable DNA-RuvA(4)-RuvB(12)-RuvC(2) complex forms which resolves the HJ.

The protein localises to the cytoplasm. Functionally, the RuvA-RuvB-RuvC complex processes Holliday junction (HJ) DNA during genetic recombination and DNA repair, while the RuvA-RuvB complex plays an important role in the rescue of blocked DNA replication forks via replication fork reversal (RFR). RuvA specifically binds to HJ cruciform DNA, conferring on it an open structure. The RuvB hexamer acts as an ATP-dependent pump, pulling dsDNA into and through the RuvAB complex. HJ branch migration allows RuvC to scan DNA until it finds its consensus sequence, where it cleaves and resolves the cruciform DNA. This Natranaerobius thermophilus (strain ATCC BAA-1301 / DSM 18059 / JW/NM-WN-LF) protein is Holliday junction branch migration complex subunit RuvA.